The following is a 344-amino-acid chain: Selenide, water dikinase (344 aa).

C15 is a catalytic residue. ATP contacts are provided by residues K18 and 46–48 (TKD). D49 serves as a coordination point for Mg(2+). ATP contacts are provided by residues D66, D89, and 137–139 (GHS). D89 contributes to the Mg(2+) binding site. D225 is a binding site for Mg(2+).

The protein belongs to the selenophosphate synthase 1 family. Class I subfamily. In terms of assembly, homodimer. Mg(2+) serves as cofactor.

The enzyme catalyses hydrogenselenide + ATP + H2O = selenophosphate + AMP + phosphate + 2 H(+). Synthesizes selenophosphate from selenide and ATP. This chain is Selenide, water dikinase, found in Colwellia psychrerythraea (strain 34H / ATCC BAA-681) (Vibrio psychroerythus).